A 491-amino-acid polypeptide reads, in one-letter code: UDP-N-acetylmuramate--L-alanine ligase (491 aa).

Residue 126 to 132 (GTHGKTT) coordinates ATP.

It belongs to the MurCDEF family.

It is found in the cytoplasm. The catalysed reaction is UDP-N-acetyl-alpha-D-muramate + L-alanine + ATP = UDP-N-acetyl-alpha-D-muramoyl-L-alanine + ADP + phosphate + H(+). It participates in cell wall biogenesis; peptidoglycan biosynthesis. In terms of biological role, cell wall formation. This chain is UDP-N-acetylmuramate--L-alanine ligase, found in Salmonella paratyphi C (strain RKS4594).